The chain runs to 384 residues: Spermidine/putrescine import ATP-binding protein PotA (384 aa).

The 233-residue stretch at 6–238 folds into the ABC transporter domain; the sequence is ITFNNVSKTF…PINHFVANFI (233 aa). Position 40–47 (40–47) interacts with ATP; the sequence is GASGSGKS.

Belongs to the ABC transporter superfamily. Spermidine/putrescine importer (TC 3.A.1.11.1) family. In terms of assembly, the complex is composed of two ATP-binding proteins (PotA), two transmembrane proteins (PotB and PotC) and a solute-binding protein (PotD).

It is found in the cell membrane. The catalysed reaction is ATP + H2O + polyamine-[polyamine-binding protein]Side 1 = ADP + phosphate + polyamineSide 2 + [polyamine-binding protein]Side 1.. Part of the ABC transporter complex PotABCD involved in spermidine/putrescine import. Responsible for energy coupling to the transport system. In Streptococcus pyogenes serotype M6 (strain ATCC BAA-946 / MGAS10394), this protein is Spermidine/putrescine import ATP-binding protein PotA.